A 216-amino-acid polypeptide reads, in one-letter code: Kynurenine formamidase (216 aa).

Position 25 (Trp-25) interacts with substrate. Zn(2+) is bound by residues His-55, His-59, and Asp-61. The Proton donor/acceptor role is filled by His-65. His-167 and Glu-179 together coordinate Zn(2+).

It belongs to the Cyclase 1 superfamily. KynB family. In terms of assembly, homodimer. It depends on Zn(2+) as a cofactor.

It carries out the reaction N-formyl-L-kynurenine + H2O = L-kynurenine + formate + H(+). It participates in amino-acid degradation; L-tryptophan degradation via kynurenine pathway; L-kynurenine from L-tryptophan: step 2/2. Catalyzes the hydrolysis of N-formyl-L-kynurenine to L-kynurenine, the second step in the kynurenine pathway of tryptophan degradation. The chain is Kynurenine formamidase from Cupriavidus taiwanensis (strain DSM 17343 / BCRC 17206 / CCUG 44338 / CIP 107171 / LMG 19424 / R1) (Ralstonia taiwanensis (strain LMG 19424)).